Here is a 198-residue protein sequence, read N- to C-terminus: Fucoxanthin-chlorophyll a-c binding protein B, chloroplastic (198 aa).

A chloroplast-targeting transit peptide spans 1–31 (MKFTVFASLFASAAAFAPAQQAARTSVATNM). 3 helical membrane passes run 73–94 (ISMLAVAGYLAQEAGWRLGGDI), 114–134 (IPQAGLIQIIAFIGFLETSVM), and 174–196 (GRAAQMGILALMVHEQLGVNILP).

It belongs to the fucoxanthin chlorophyll protein family. In terms of assembly, the LHC complex of chromophytic algae is composed of fucoxanthin, chlorophyll A and C bound non-covalently by fucoxanthin chlorophyll proteins (FCPs). The ratio of the pigments in LHC; fucoxanthin: chlorophyll C: chlorophyll A; (0.6-1): (0.1-0.3): (1).

Its subcellular location is the plastid. The protein localises to the chloroplast thylakoid membrane. Functionally, the light-harvesting complex (LHC) functions as a light receptor, it captures and delivers excitation energy to photosystems with which it is closely associated. Energy is transferred from the carotenoid and chlorophyll C (or B) to chlorophyll A and the photosynthetic reaction centers where it is used to synthesize ATP and reducing power. The polypeptide is Fucoxanthin-chlorophyll a-c binding protein B, chloroplastic (FCPB) (Phaeodactylum tricornutum (Diatom)).